The sequence spans 409 residues: FBD-associated F-box protein At4g10400 (409 aa).

The F-box domain occupies 1–47 (MDRISGLPDEVLVKILSFVPTKVAVSTSILSKRWEFLWMWLTKLKFG). Positions 330–379 (SWNQPSIVPECMLSSLQKFTWFKYLGRPQDRDIAVYILKNACRLRTATIK) constitute an FBD domain.

The chain is FBD-associated F-box protein At4g10400 from Arabidopsis thaliana (Mouse-ear cress).